Reading from the N-terminus, the 190-residue chain is Putative manganese efflux pump MntP (190 aa).

A run of 6 helical transmembrane segments spans residues 5-25 (ALLA…VATG), 41-61 (WHFG…GQGI), 64-84 (FVDA…GLKM), 105-125 (TSLI…GVTL), 127-147 (MLGL…LGLT), and 169-189 (ILGG…SGVF).

Belongs to the MntP (TC 9.B.29) family.

The protein localises to the cell inner membrane. Functionally, probably functions as a manganese efflux pump. In Oleidesulfovibrio alaskensis (strain ATCC BAA-1058 / DSM 17464 / G20) (Desulfovibrio alaskensis), this protein is Putative manganese efflux pump MntP.